The sequence spans 120 residues: MFLLYEYDIFWAFLIISSAIPVLAFLISGVLSPIRKGPEKLSSYESGIEPIGDAWLQFRIRYYMFALVFVVFDVETVFLYPWAMSFDVLGVSAFIEAFIFVLILILGLVYAWRKGALEWS.

3 helical membrane-spanning segments follow: residues 9–29 (IFWA…LISG), 64–84 (MFAL…PWAM), and 88–108 (VLGV…ILGL).

Belongs to the complex I subunit 3 family. In terms of assembly, NDH is composed of at least 16 different subunits, 5 of which are encoded in the nucleus.

It is found in the plastid. Its subcellular location is the chloroplast thylakoid membrane. It carries out the reaction a plastoquinone + NADH + (n+1) H(+)(in) = a plastoquinol + NAD(+) + n H(+)(out). The enzyme catalyses a plastoquinone + NADPH + (n+1) H(+)(in) = a plastoquinol + NADP(+) + n H(+)(out). NDH shuttles electrons from NAD(P)H:plastoquinone, via FMN and iron-sulfur (Fe-S) centers, to quinones in the photosynthetic chain and possibly in a chloroplast respiratory chain. The immediate electron acceptor for the enzyme in this species is believed to be plastoquinone. Couples the redox reaction to proton translocation, and thus conserves the redox energy in a proton gradient. The polypeptide is NAD(P)H-quinone oxidoreductase subunit 3, chloroplastic (Lobularia maritima (Sweet alyssum)).